The chain runs to 311 residues: Formyltransferase/hydrolase complex subunit D (311 aa).

Belongs to the FTR family. In terms of assembly, homotetramer. Octaheteromer. Part of the formyltransferase/hydrolase complex fhc; composed of FhcA, FhcB, FhcC and FhcD.

It localises to the cytoplasm. It catalyses the reaction N-formylmethanofuran + 5,6,7,8-tetrahydromethanopterin + H(+) = N(5)-formyl-5,6,7,8-tetrahydromethanopterin + methanofuran. It participates in one-carbon metabolism; formaldehyde degradation; formate from formaldehyde (H(4)MPT route): step 4/5. In terms of biological role, involved in the transformation of 5-formyl tetrahydromethanopterin (5-formyl-H(4)MPT) to methanofuran (MFR) and formate via the intermediate formylmethanofuran (formyl-MFR). Catalyzes the transfer of a formyl group from 5-formyl-H(4)MPT to MFR to produce tetrahydromethanopterin (H(4)MPT) and formyl-MFR, which is then hydrolyzed to formate and MFR. This chain is Formyltransferase/hydrolase complex subunit D, found in Methylorubrum extorquens (strain ATCC 14718 / DSM 1338 / JCM 2805 / NCIMB 9133 / AM1) (Methylobacterium extorquens).